The following is a 430-amino-acid chain: MKETIDFLIDTIEARQVLDSRGNPTVEAEVFLECGAIGRAIVPSGASTGAHEAHELRDGGTKYMGKGVLDAVNKIHETISPALCGLSALDQTIIDKLMIEIDGTPNKSNLGANSILAVSLANARAASKALDMPLYRYLGDPLSNLLPVPLMNVINGGAHAPNGLDCQEFMLVPHGVKTFSEALRMGTEIFHSLKSLLDKKGLSTAVGDEGGFAPELSSCEAAGDLLLEAIQKAGFIPGKQVSLALDVASTEFYRDGFYKYEGTNLTSSQMISYLSNLVSNYPIVSIEDGLGEDDWEGWAALNKEIGHKVQLVGDDLFVTNTERLRKGILEKSANSILIKVNQIGTLTETLEAMDLAKSAGFTSVISHRSGETEDTTIADLSVATRAGQIKTGSLSRSERIAKYNRLLRIEEELGNQARFAGDLGLGPKNI.

Residue Gln-167 participates in (2R)-2-phosphoglycerate binding. Glu-209 acts as the Proton donor in catalysis. 3 residues coordinate Mg(2+): Asp-246, Glu-287, and Asp-314. (2R)-2-phosphoglycerate is bound by residues Lys-339, Arg-368, Ser-369, and Lys-390. Lys-339 functions as the Proton acceptor in the catalytic mechanism.

The protein belongs to the enolase family. It depends on Mg(2+) as a cofactor.

The protein resides in the cytoplasm. It localises to the secreted. It is found in the cell surface. The catalysed reaction is (2R)-2-phosphoglycerate = phosphoenolpyruvate + H2O. It functions in the pathway carbohydrate degradation; glycolysis; pyruvate from D-glyceraldehyde 3-phosphate: step 4/5. Catalyzes the reversible conversion of 2-phosphoglycerate (2-PG) into phosphoenolpyruvate (PEP). It is essential for the degradation of carbohydrates via glycolysis. The sequence is that of Enolase from Prochlorococcus marinus (strain MIT 9515).